A 45-amino-acid polypeptide reads, in one-letter code: Large ribosomal subunit protein bL34 (45 aa).

The interval 1–45 (MTKRTFGGTSRKRKRVSGFRVRMRSHTGRRVVRTRRKRGRSRLTV) is disordered. Residues 10–45 (SRKRKRVSGFRVRMRSHTGRRVVRTRRKRGRSRLTV) are compositionally biased toward basic residues.

This sequence belongs to the bacterial ribosomal protein bL34 family.

The protein is Large ribosomal subunit protein bL34 of Prochlorococcus marinus (strain NATL2A).